The primary structure comprises 81 residues: MEIARETLITIGLTILVVLLIITGFSLVLRLIPGVYSSVSRSSFTAGRILRFMEIFSTIMFIPGIIILYAAYIRKIKMKNN.

The next 2 membrane-spanning stretches (helical) occupy residues 8–28 (LITI…FSLV) and 53–73 (MEIF…AAYI).

This sequence belongs to the Chordopoxvirinae I5 family.

Its subcellular location is the virion membrane. The sequence is that of Protein I5 homolog from Vertebrata (FPV).